The following is a 302-amino-acid chain: Large ribosomal subunit protein uL18 (302 aa).

The protein belongs to the universal ribosomal protein uL18 family. Component of the large ribosomal subunit (LSU).

The protein resides in the cytoplasm. The protein localises to the nucleus. In terms of biological role, component of the ribosome, a large ribonucleoprotein complex responsible for the synthesis of proteins in the cell. The small ribosomal subunit (SSU) binds messenger RNAs (mRNAs) and translates the encoded message by selecting cognate aminoacyl-transfer RNA (tRNA) molecules. The large subunit (LSU) contains the ribosomal catalytic site termed the peptidyl transferase center (PTC), which catalyzes the formation of peptide bonds, thereby polymerizing the amino acids delivered by tRNAs into a polypeptide chain. The nascent polypeptides leave the ribosome through a tunnel in the LSU and interact with protein factors that function in enzymatic processing, targeting, and the membrane insertion of nascent chains at the exit of the ribosomal tunnel. The protein is Large ribosomal subunit protein uL18 (RPL5) of Cucumis sativus (Cucumber).